Consider the following 125-residue polypeptide: Large ribosomal subunit protein mL51 (125 aa).

The N-terminal 29 residues, 1–29 (MWSVQQLLWGCRSLLTQGCRSFSLGSRDL), are a transit peptide targeting the mitochondrion.

It belongs to the mitochondrion-specific ribosomal protein mL51 family. In terms of assembly, component of the mitochondrial ribosome large subunit (39S) which comprises a 16S rRNA and about 50 distinct proteins.

Its subcellular location is the mitochondrion. In Xenopus tropicalis (Western clawed frog), this protein is Large ribosomal subunit protein mL51 (mrpl51).